The following is a 146-amino-acid chain: Anti-sigma F factor (146 aa).

This sequence belongs to the anti-sigma-factor family.

The catalysed reaction is L-seryl-[protein] + ATP = O-phospho-L-seryl-[protein] + ADP + H(+). It catalyses the reaction L-threonyl-[protein] + ATP = O-phospho-L-threonyl-[protein] + ADP + H(+). Its function is as follows. Binds to sigma F and blocks its ability to form an RNA polymerase holoenzyme (E-sigma F). Phosphorylates SpoIIAA on a serine residue. This phosphorylation may enable SpoIIAA to act as an anti-anti-sigma factor that counteracts SpoIIAB and thus releases sigma F from inhibition. The sequence is that of Anti-sigma F factor from Bacillus licheniformis.